A 457-amino-acid chain; its full sequence is Phosphomethylpyrimidine synthase (457 aa).

Substrate-binding positions include N80, M109, Y139, H175, 195–197 (SRG), 236–239 (DSLR), and E275. H279 lines the Zn(2+) pocket. Y302 serves as a coordination point for substrate. H343 provides a ligand contact to Zn(2+). The [4Fe-4S] cluster site is built by C423, C426, and C431.

The protein belongs to the ThiC family. Requires [4Fe-4S] cluster as cofactor.

It catalyses the reaction 5-amino-1-(5-phospho-beta-D-ribosyl)imidazole + S-adenosyl-L-methionine = 4-amino-2-methyl-5-(phosphooxymethyl)pyrimidine + CO + 5'-deoxyadenosine + formate + L-methionine + 3 H(+). Its pathway is cofactor biosynthesis; thiamine diphosphate biosynthesis. Its function is as follows. Catalyzes the synthesis of the hydroxymethylpyrimidine phosphate (HMP-P) moiety of thiamine from aminoimidazole ribotide (AIR) in a radical S-adenosyl-L-methionine (SAM)-dependent reaction. The polypeptide is Phosphomethylpyrimidine synthase (Nostoc punctiforme (strain ATCC 29133 / PCC 73102)).